A 219-amino-acid polypeptide reads, in one-letter code: Response regulator ArlR (219 aa).

Residues 3–116 (NILIVEDEQN…ELFARIRAVL (114 aa)) form the Response regulatory domain. Asp-52 bears the 4-aspartylphosphate mark. Positions 122-219 (KDIIDINGIK…TVRGVGYVIR (98 aa)) form a DNA-binding region, ompR/PhoB-type.

Post-translationally, phosphorylated by ArlS.

The protein localises to the cytoplasm. Functionally, member of the two-component regulatory system ArlS/ArlR. The chain is Response regulator ArlR (arlR) from Staphylococcus haemolyticus (strain JCSC1435).